The sequence spans 294 residues: NAD kinase (294 aa).

Catalysis depends on Asp74, which acts as the Proton acceptor. Residues 74–75 (DG), Lys79, 149–150 (NE), Asp179, 190–195 (TGYSLS), and Ala214 each bind NAD(+).

The protein belongs to the NAD kinase family. A divalent metal cation serves as cofactor.

Its subcellular location is the cytoplasm. The enzyme catalyses NAD(+) + ATP = ADP + NADP(+) + H(+). In terms of biological role, involved in the regulation of the intracellular balance of NAD and NADP, and is a key enzyme in the biosynthesis of NADP. Catalyzes specifically the phosphorylation on 2'-hydroxyl of the adenosine moiety of NAD to yield NADP. This Christiangramia forsetii (strain DSM 17595 / CGMCC 1.15422 / KT0803) (Gramella forsetii) protein is NAD kinase.